A 161-amino-acid polypeptide reads, in one-letter code: Arachidonate 5-lipoxygenase-activating protein (161 aa).

At methionine 1–asparagine 8 the chain is on the lumenal side. The chain crosses the membrane as a helical span at residues valine 9–valine 30. Topologically, residues glutamate 31–arginine 52 are cytoplasmic. The chain crosses the membrane as a helical span at residues valine 53–leucine 77. Residues cysteine 78–glutamine 80 lie on the Lumenal side of the membrane. Residues valine 81–leucine 102 traverse the membrane as a helical segment. The Cytoplasmic portion of the chain corresponds to glycine 103–glutamine 107. The stretch at serine 108–glycine 115 is an intramembrane region. The chain crosses the membrane as a helical span at residues lysine 116–alanine 128. The Lumenal portion of the chain corresponds to glycine 129 to proline 161.

This sequence belongs to the MAPEG family. As to quaternary structure, homotrimer. Interacts with LTC4S and ALOX5.

It is found in the nucleus membrane. The protein localises to the endoplasmic reticulum membrane. Its function is as follows. Required for leukotriene biosynthesis by ALOX5 (5-lipoxygenase). Anchors ALOX5 to the membrane. Binds arachidonic acid, and could play an essential role in the transfer of arachidonic acid to ALOX5. Binds to MK-886, a compound that blocks the biosynthesis of leukotrienes. The polypeptide is Arachidonate 5-lipoxygenase-activating protein (Alox5ap) (Mus musculus (Mouse)).